Here is a 352-residue protein sequence, read N- to C-terminus: Mannonate dehydratase (352 aa).

It belongs to the mannonate dehydratase family. It depends on Fe(2+) as a cofactor. The cofactor is Mn(2+).

The enzyme catalyses D-mannonate = 2-dehydro-3-deoxy-D-gluconate + H2O. The protein operates within carbohydrate metabolism; pentose and glucuronate interconversion. Catalyzes the dehydration of D-mannonate. The chain is Mannonate dehydratase from Paraburkholderia phytofirmans (strain DSM 17436 / LMG 22146 / PsJN) (Burkholderia phytofirmans).